A 508-amino-acid chain; its full sequence is Maturase K (508 aa).

This sequence belongs to the intron maturase 2 family. MatK subfamily.

The protein resides in the plastid. Its subcellular location is the chloroplast. Functionally, usually encoded in the trnK tRNA gene intron. Probably assists in splicing its own and other chloroplast group II introns. The sequence is that of Maturase K from Cunninghamia lanceolata (China fir).